The chain runs to 478 residues: Proton-coupled amino acid transporter 2 (478 aa).

Polar residues-rich tracts occupy residues 1–14 and 26–37; these read MSVTKSARSPQVAT and KLQSQDPSPANG. The interval 1–46 is disordered; that stretch reads MSVTKSARSPQVATPLNLDLPESAKKLQSQDPSPANGSSSESSKKT. The Cytoplasmic segment spans residues 1-53; that stretch reads MSVTKSARSPQVATPLNLDLPESAKKLQSQDPSPANGSSSESSKKTKGITGFQ. A helical transmembrane segment spans residues 54–74; sequence TLVHLVKGNMGTGILGLPLAV. Over 75–76 the chain is Extracellular; it reads KN. The helical transmembrane segment at 77–97 threads the bilayer; that stretch reads AGILMGPLSLLVMGLIACHCM. Over 98-143 the chain is Cytoplasmic; sequence HILVRCAQRFCHRLNKPFMDYGDTVMHGLAFSPNAWLQNHAHWGRR. Residues 144-164 traverse the membrane as a helical segment; the sequence is VVSFFLIVTQLGFCCVYIVFL. At 165–192 the chain is on the extracellular side; the sequence is ADNLKQVVEAVNSTTISCHKNETVVLTP. Residues 193–213 form a helical membrane-spanning segment; that stretch reads TMDSRLYMLSFLPVLGLLVFV. The Cytoplasmic portion of the chain corresponds to 214 to 217; sequence RNLR. Residues 218-238 form a helical membrane-spanning segment; the sequence is VLTIFSLLANISMLVSLVIIA. Residues 239–259 are Extracellular-facing; that stretch reads QYIIQEIPDASQLPLVASWKT. A helical membrane pass occupies residues 260–280; it reads YPLFFGTAIFSFESIGVVLPL. At 281-292 the chain is on the cytoplasmic side; sequence ENKMKDARGFPT. The helical transmembrane segment at 293 to 313 threads the bilayer; it reads ILSLGMSIITTLYIAIGALGY. At 314–340 the chain is on the extracellular side; it reads LRFGDDIKASITLNLPNCWLYQSVKLL. Residues 341–361 traverse the membrane as a helical segment; the sequence is YVVGILCTYALQFYVPAEIII. The Cytoplasmic segment spans residues 362–374; it reads PLAVSQVSKRWAL. Residues 375–395 form a helical membrane-spanning segment; that stretch reads PVDLSIRLALVCLTCMLAILI. The Extracellular segment spans residues 396–399; that stretch reads PRLD. The helical transmembrane segment at 400–420 threads the bilayer; sequence LVLSLVGSVSSSALALIIPPL. Residues 421-441 are Cytoplasmic-facing; that stretch reads LEVVTYYGEGISPLTVTKDAL. A helical membrane pass occupies residues 442 to 462; that stretch reads ISILGFMGFVVGTYQALDELI. Over 463–478 the chain is Extracellular; that stretch reads KSGNSPALSNSTMFIQ.

It belongs to the amino acid/polyamine transporter 2 family. In terms of tissue distribution, expressed in spinal cord, brain, testis, lung, heart, colon, spleen, kidney and muscle. Found in neuronal cell bodies in the anterior horn, in spinal cord brain stem, cerebellum, hippocampus, hypothalamus, rhinencephalon, cerebral cortex, and olfactory bulb in the brain. Also expressed in bone and fat tissues.

It localises to the cell membrane. Its subcellular location is the endoplasmic reticulum membrane. It is found in the recycling endosome membrane. The catalysed reaction is glycine(in) + H(+)(in) = glycine(out) + H(+)(out). It carries out the reaction L-alanine(in) + H(+)(in) = L-alanine(out) + H(+)(out). It catalyses the reaction D-alanine(in) + H(+)(in) = D-alanine(out) + H(+)(out). The enzyme catalyses L-proline(out) + H(+)(out) = L-proline(in) + H(+)(in). The catalysed reaction is D-proline(out) + H(+)(out) = D-proline(in) + H(+)(in). It carries out the reaction 4-hydroxy-L-proline(in) + H(+)(in) = 4-hydroxy-L-proline(out) + H(+)(out). It catalyses the reaction L-serine(in) + H(+)(in) = L-serine(out) + H(+)(out). The enzyme catalyses D-serine(out) + H(+)(out) = D-serine(in) + H(+)(in). The catalysed reaction is beta-alanine(in) + H(+)(in) = beta-alanine(out) + H(+)(out). It carries out the reaction 4-aminobutanoate(in) + H(+)(in) = 4-aminobutanoate(out) + H(+)(out). It catalyses the reaction sarcosine(in) + H(+)(in) = sarcosine(out) + H(+)(out). The enzyme catalyses N,N-dimethylglycine(in) + H(+)(in) = N,N-dimethylglycine(out) + H(+)(out). Functionally, electrogenic proton/amino acid symporter with a high selectivity for the small side chains amino acids glycine, alanine and proline, where both L- and D-enantiomers are transported. Extension of the backbone length, as in beta-alanine and 4-aminobutanoate or methylation of the amino group, as in sarcosine and N,N-dimethylglycine, are also tolerated but decrease transport efficiency. A free carboxyl group is preferred. The chain is Proton-coupled amino acid transporter 2 from Mus musculus (Mouse).